A 193-amino-acid polypeptide reads, in one-letter code: Superoxide dismutase [Fe] (193 aa).

Positions 27, 74, 157, and 161 each coordinate Fe cation.

It belongs to the iron/manganese superoxide dismutase family. As to quaternary structure, homodimer. Fe cation is required as a cofactor.

The enzyme catalyses 2 superoxide + 2 H(+) = H2O2 + O2. Destroys superoxide anion radicals which are normally produced within the cells and which are toxic to biological systems. This chain is Superoxide dismutase [Fe] (sodB), found in Coxiella burnetii (strain RSA 493 / Nine Mile phase I).